The chain runs to 306 residues: Methionyl-tRNA formyltransferase (306 aa).

110–113 (SLLP) lines the (6S)-5,6,7,8-tetrahydrofolate pocket.

This sequence belongs to the Fmt family.

It carries out the reaction L-methionyl-tRNA(fMet) + (6R)-10-formyltetrahydrofolate = N-formyl-L-methionyl-tRNA(fMet) + (6S)-5,6,7,8-tetrahydrofolate + H(+). In terms of biological role, attaches a formyl group to the free amino group of methionyl-tRNA(fMet). The formyl group appears to play a dual role in the initiator identity of N-formylmethionyl-tRNA by promoting its recognition by IF2 and preventing the misappropriation of this tRNA by the elongation apparatus. This chain is Methionyl-tRNA formyltransferase, found in Brucella suis biovar 1 (strain 1330).